The sequence spans 327 residues: MPRSPDSYHDPVLLHECVDALVRGPGLYVDGTLGGGGHSMAILRALESGGWLEGSLLVGIDQDDEALHEAGSRLAAYPGRAVAVKGNFQDIARLASREAVQKGLEPRARAILLDLGVSSRQIDRAERGFSYMRTGPLDMRMDSSASTTAADILNDADERELAAIFFRYGEEPRSRAIARAVIAARMKHGPLSSTEDLADIVRSVVHGRQPSIRSLSRVFQALRIAVNRELDVLQRVLEDGVSVLDEGGRIAVISYHSLEDRMVKQYFAAQSKCDWGPKGVGLREPLSRGTLVPVTRKAVVASEDEVRVNPRSRSAKLRVAEKTGGVQ.

S-adenosyl-L-methionine contacts are provided by residues 36-38 (GGH), D61, F88, D114, and Q121.

Belongs to the methyltransferase superfamily. RsmH family.

The protein localises to the cytoplasm. It carries out the reaction cytidine(1402) in 16S rRNA + S-adenosyl-L-methionine = N(4)-methylcytidine(1402) in 16S rRNA + S-adenosyl-L-homocysteine + H(+). In terms of biological role, specifically methylates the N4 position of cytidine in position 1402 (C1402) of 16S rRNA. This chain is Ribosomal RNA small subunit methyltransferase H, found in Chlorobium luteolum (strain DSM 273 / BCRC 81028 / 2530) (Pelodictyon luteolum).